Reading from the N-terminus, the 356-residue chain is UDP-N-acetylglucosamine--N-acetylmuramyl-(pentapeptide) pyrophosphoryl-undecaprenol N-acetylglucosamine transferase (356 aa).

Residues 11 to 13 (TGG), Asn-117, Arg-160, Ser-188, and Gln-290 contribute to the UDP-N-acetyl-alpha-D-glucosamine site.

This sequence belongs to the glycosyltransferase 28 family. MurG subfamily.

The protein resides in the cell inner membrane. The catalysed reaction is di-trans,octa-cis-undecaprenyl diphospho-N-acetyl-alpha-D-muramoyl-L-alanyl-D-glutamyl-meso-2,6-diaminopimeloyl-D-alanyl-D-alanine + UDP-N-acetyl-alpha-D-glucosamine = di-trans,octa-cis-undecaprenyl diphospho-[N-acetyl-alpha-D-glucosaminyl-(1-&gt;4)]-N-acetyl-alpha-D-muramoyl-L-alanyl-D-glutamyl-meso-2,6-diaminopimeloyl-D-alanyl-D-alanine + UDP + H(+). It participates in cell wall biogenesis; peptidoglycan biosynthesis. Functionally, cell wall formation. Catalyzes the transfer of a GlcNAc subunit on undecaprenyl-pyrophosphoryl-MurNAc-pentapeptide (lipid intermediate I) to form undecaprenyl-pyrophosphoryl-MurNAc-(pentapeptide)GlcNAc (lipid intermediate II). This Rickettsia bellii (strain RML369-C) protein is UDP-N-acetylglucosamine--N-acetylmuramyl-(pentapeptide) pyrophosphoryl-undecaprenol N-acetylglucosamine transferase.